The sequence spans 202 residues: Virulence protein F (202 aa).

The segment covering 1 to 15 has biased composition (polar residues); the sequence is MRNSSLRDASGSNDA. Positions 1–21 are disordered; the sequence is MRNSSLRDASGSNDAQVPHKT. Residues 20–42 enclose the F-box domain; that stretch reads KTELLNLPDHVLTEVAKRLATNN.

Component of SCF(virF) E3 ubiquitin ligase complexes. Interacts with host VIP1 and SKP1A. Interacts with Arabidopsis thaliana ENAP1/VFP3 and VFP5 in the host cell nucleus.

The protein resides in the host nucleus. In terms of biological role, in the host plant, component of SCF(virF) E3 ubiquitin ligase complexes, which mediate the ubiquitination and subsequent proteasomal degradation of target proteins such as the host VIP1, after its implication in T-DNA translocation to the host nucleus. Required for the formation of tumors of a wild-type size on certain plant species only. In Agrobacterium tumefaciens (strain 15955), this protein is Virulence protein F.